A 244-amino-acid chain; its full sequence is Small ribosomal subunit protein uS3 (244 aa).

The KH type-2 domain occupies 39-107 (VREMLRKKLA…PAHINVTEVR (69 aa)). The disordered stretch occupies residues 213–244 (VGQEKQDDSPRNDRNDRGDRGDRPSRPAREAR). The segment covering 216 to 244 (EKQDDSPRNDRNDRGDRGDRPSRPAREAR) has biased composition (basic and acidic residues).

Belongs to the universal ribosomal protein uS3 family. Part of the 30S ribosomal subunit. Forms a tight complex with proteins S10 and S14.

In terms of biological role, binds the lower part of the 30S subunit head. Binds mRNA in the 70S ribosome, positioning it for translation. This is Small ribosomal subunit protein uS3 from Xanthomonas oryzae pv. oryzae (strain MAFF 311018).